The primary structure comprises 142 residues: ATP synthase subunit b' (142 aa).

Residues 7–27 (TLPLMMFQFFLLVAVLNAVFF) form a helical membrane-spanning segment.

This sequence belongs to the ATPase B chain family. As to quaternary structure, F-type ATPases have 2 components, F(1) - the catalytic core - and F(0) - the membrane proton channel. F(1) has five subunits: alpha(3), beta(3), gamma(1), delta(1), epsilon(1). F(0) has four main subunits: a(1), b(1), b'(1) and c(10-14). The alpha and beta chains form an alternating ring which encloses part of the gamma chain. F(1) is attached to F(0) by a central stalk formed by the gamma and epsilon chains, while a peripheral stalk is formed by the delta, b and b' chains.

The protein localises to the cellular thylakoid membrane. Its function is as follows. F(1)F(0) ATP synthase produces ATP from ADP in the presence of a proton or sodium gradient. F-type ATPases consist of two structural domains, F(1) containing the extramembraneous catalytic core and F(0) containing the membrane proton channel, linked together by a central stalk and a peripheral stalk. During catalysis, ATP synthesis in the catalytic domain of F(1) is coupled via a rotary mechanism of the central stalk subunits to proton translocation. Component of the F(0) channel, it forms part of the peripheral stalk, linking F(1) to F(0). The b'-subunit is a diverged and duplicated form of b found in plants and photosynthetic bacteria. This is ATP synthase subunit b' from Acaryochloris marina (strain MBIC 11017).